The chain runs to 326 residues: Malate dehydrogenase (326 aa).

G11–G17 is a binding site for NAD(+). 2 residues coordinate substrate: R92 and R98. Residues N105, Q112, and V129 to N131 each bind NAD(+). Substrate-binding residues include N131 and R162. The active-site Proton acceptor is the H187.

The protein belongs to the LDH/MDH superfamily. MDH type 2 family.

The catalysed reaction is (S)-malate + NAD(+) = oxaloacetate + NADH + H(+). Its function is as follows. Catalyzes the reversible oxidation of malate to oxaloacetate. This is Malate dehydrogenase from Alkalilimnicola ehrlichii (strain ATCC BAA-1101 / DSM 17681 / MLHE-1).